The sequence spans 269 residues: Tryptophan synthase alpha chain (269 aa).

Catalysis depends on proton acceptor residues E49 and D60.

It belongs to the TrpA family. Tetramer of two alpha and two beta chains.

The catalysed reaction is (1S,2R)-1-C-(indol-3-yl)glycerol 3-phosphate + L-serine = D-glyceraldehyde 3-phosphate + L-tryptophan + H2O. It functions in the pathway amino-acid biosynthesis; L-tryptophan biosynthesis; L-tryptophan from chorismate: step 5/5. Functionally, the alpha subunit is responsible for the aldol cleavage of indoleglycerol phosphate to indole and glyceraldehyde 3-phosphate. This Enterobacter sp. (strain 638) protein is Tryptophan synthase alpha chain.